A 184-amino-acid polypeptide reads, in one-letter code: ATP synthase subunit delta (184 aa).

The protein belongs to the ATPase delta chain family. As to quaternary structure, F-type ATPases have 2 components, F(1) - the catalytic core - and F(0) - the membrane proton channel. F(1) has five subunits: alpha(3), beta(3), gamma(1), delta(1), epsilon(1). CF(0) has four main subunits: a(1), b(1), b'(1) and c(10-14). The alpha and beta chains form an alternating ring which encloses part of the gamma chain. F(1) is attached to F(0) by a central stalk formed by the gamma and epsilon chains, while a peripheral stalk is formed by the delta, b and b' chains.

It is found in the cellular thylakoid membrane. Functionally, f(1)F(0) ATP synthase produces ATP from ADP in the presence of a proton or sodium gradient. F-type ATPases consist of two structural domains, F(1) containing the extramembraneous catalytic core and F(0) containing the membrane proton channel, linked together by a central stalk and a peripheral stalk. During catalysis, ATP synthesis in the catalytic domain of F(1) is coupled via a rotary mechanism of the central stalk subunits to proton translocation. In terms of biological role, this protein is part of the stalk that links CF(0) to CF(1). It either transmits conformational changes from CF(0) to CF(1) or is implicated in proton conduction. The polypeptide is ATP synthase subunit delta (Synechococcus sp. (strain PCC 6716)).